We begin with the raw amino-acid sequence, 429 residues long: Glutamate-1-semialdehyde 2,1-aminomutase 1 (429 aa).

N6-(pyridoxal phosphate)lysine is present on Lys268.

It belongs to the class-III pyridoxal-phosphate-dependent aminotransferase family. HemL subfamily. In terms of assembly, homodimer. Pyridoxal 5'-phosphate serves as cofactor.

The protein localises to the cytoplasm. It carries out the reaction (S)-4-amino-5-oxopentanoate = 5-aminolevulinate. It functions in the pathway porphyrin-containing compound metabolism; protoporphyrin-IX biosynthesis; 5-aminolevulinate from L-glutamyl-tRNA(Glu): step 2/2. The sequence is that of Glutamate-1-semialdehyde 2,1-aminomutase 1 from Listeria monocytogenes serotype 4b (strain F2365).